The primary structure comprises 749 residues: Cytosolic phospholipase A2 (749 aa).

The C2 domain occupies 1–124 (MASIDPYQHI…GEKKQVPFTF (124 aa)). The interval 1–178 (MASIDPYQHI…LRKLLGPEKT (178 aa)) is phospholipid binding. Residues aspartate 40, threonine 41, aspartate 43, asparagine 65, aspartate 93, alanine 94, and asparagine 95 each contribute to the Ca(2+) site. Residues 138–740 (VCSSTDLRFS…NDVESRKLHH (603 aa)) enclose the PLA2c domain. The active-site Nucleophile is the serine 229. The disordered stretch occupies residues 428–452 (HILGNDSSDSDDEMQEPKGTENAKA). Basic and acidic residues predominate over residues 442 to 452 (QEPKGTENAKA). Aspartate 549 (proton acceptor) is an active-site residue. Positions 729–749 (SLNDVESRKLHHKDSQSKFQM) are disordered. Positions 733–749 (VESRKLHHKDSQSKFQM) are enriched in basic and acidic residues.

It localises to the cytoplasm. It is found in the cytoplasmic vesicle. The enzyme catalyses a 1,2-diacyl-sn-glycero-3-phosphocholine + H2O = a 1-acyl-sn-glycero-3-phosphocholine + a fatty acid + H(+). It carries out the reaction a 1-acyl-sn-glycero-3-phosphocholine + H2O = sn-glycerol 3-phosphocholine + a fatty acid + H(+). Its activity is regulated as follows. Stimulated by agonists such as ATP, EGF, thrombin and bradykinin as well as by cytosolic Ca(2+). In terms of biological role, selectively hydrolyzes arachidonyl phospholipids in the sn-2 position releasing arachidonic acid. Together with its lysophospholipid activity, it is implicated in the initiation of the inflammatory response. This chain is Cytosolic phospholipase A2 (pla2g4a), found in Xenopus laevis (African clawed frog).